Reading from the N-terminus, the 338-residue chain is 3-dehydroquinate synthase (338 aa).

The protein belongs to the archaeal-type DHQ synthase family.

The catalysed reaction is 2-amino-2,3,7-trideoxy-D-lyxo-hept-6-ulosonate + NAD(+) + H2O = 3-dehydroquinate + NH4(+) + NADH + H(+). Catalyzes the oxidative deamination and cyclization of 2-amino-3,7-dideoxy-D-threo-hept-6-ulosonic acid (ADH) to yield 3-dehydroquinate (DHQ), which is fed into the canonical shikimic pathway of aromatic amino acid biosynthesis. This Cenarchaeum symbiosum (strain A) protein is 3-dehydroquinate synthase.